Consider the following 4367-residue polypeptide: Dynein heavy chain, cytoplasmic (4367 aa).

Positions 1–13 are enriched in pro residues; it reads MMDSVPSPPPQPS. Residues 1–20 form a disordered region; it reads MMDSVPSPPPQPSPDANGVA. Residues 1–1904 are stem; that stretch reads MMDSVPSPPP…HIKMANAKLN (1904 aa). Coiled-coil stretches lie at residues 676 to 693, 1176 to 1215, 1327 to 1351, 1557 to 1574, and 1637 to 1668; these read ARQI…VEQV, IKFA…EAVR, LTHF…KEAL, YKEF…LNRV, and NIPN…KERV. AAA regions lie at residues 1905 to 2130, 2202 to 2460, 2566 to 2815, and 2909 to 3179; these read YGFE…VLVS, EAIR…FTVA, EVNT…WVRG, and TFCE…QGKI. 1943–1950 is an ATP binding site; that stretch reads GPAGTGKT. Residues 2195–2218 adopt a coiled-coil conformation; it reads ASLEKLQEAIRRLAAERQLVVNDI. Residues 2240–2247, 2605–2612, and 2947–2954 each bind ATP; these read GNSGSGKS, GPPGSGKT, and GVSGSGKT. Coiled coils occupy residues 3193–3296, 3423–3481, and 3778–3809; these read QYVK…LARA, PLRE…SRVQ, and VIET…VEQI. The interval 3193 to 3481 is stalk; it reads QYVKLYNEKR…AIKAEMSRVQ (289 aa). 2 AAA regions span residues 3565 to 3794 and 4003 to 4215; these read LSTA…EISA and AERF…VIDT.

The protein belongs to the dynein heavy chain family. As to quaternary structure, consists of at least two heavy chains and a number of intermediate and light chains.

It localises to the cytoplasm. The protein localises to the cytoskeleton. Functionally, cytoplasmic dynein acts as a motor for the intracellular retrograde motility of vesicles and organelles along microtubules. Dynein has ATPase activity; the force-producing power stroke is thought to occur on release of ADP. Required to maintain uniform nuclear distribution in hyphae. This chain is Dynein heavy chain, cytoplasmic (ro-1), found in Neurospora crassa (strain ATCC 24698 / 74-OR23-1A / CBS 708.71 / DSM 1257 / FGSC 987).